A 551-amino-acid polypeptide reads, in one-letter code: Interleukin-2 receptor subunit beta (551 aa).

The N-terminal stretch at 1 to 26 (MAAPALSWRLPLLILLLPLATSWASA) is a signal peptide. Residues 27–240 (AVNGTSQFTC…TKPAALGKDT (214 aa)) lie on the Extracellular side of the membrane. N-linked (GlcNAc...) asparagine glycans are attached at residues Asn-29, Asn-43, and Asn-71. 3 cysteine pairs are disulfide-bonded: Cys-36-Cys-46, Cys-59-Cys-110, and Cys-74-Cys-86. The region spanning 134–234 (APISLQVVHV…QPLAFRTKPA (101 aa)) is the Fibronectin type-III domain. Residue Asn-149 is glycosylated (N-linked (GlcNAc...) asparagine). The WSXWS motif signature appears at 220–224 (WSPWS). A helical membrane pass occupies residues 241 to 265 (IPWLGHLLVGLSGAFGFIILVYLLI). The Cytoplasmic segment spans residues 266 to 551 (NCRNTGPWLK…LQGQDPTHLV (286 aa)). Positions 278-286 (LKCNTPDPS) match the Box 1 motif motif. Disordered regions lie at residues 389–416 (EEDP…GEDD) and 432–486 (PSLL…VDFQ).

The protein belongs to the type I cytokine receptor family. Type 4 subfamily. In terms of assembly, non-covalent dimer of an alpha and a beta subunit. IL2R exists in 3 different forms: a high affinity dimer, an intermediate affinity monomer (beta subunit), and a low affinity monomer (alpha subunit). The high and intermediate affinity forms also associate with a gamma subunit. Interacts with SHB upon interleukin stimulation. (Microbial infection) Interacts with HTLV-1 accessory protein p12I.

The protein localises to the cell membrane. Its function is as follows. Receptor for interleukin-2. This beta subunit is involved in receptor mediated endocytosis and transduces the mitogenic signals of IL2. Probably in association with IL15RA, involved in the stimulation of neutrophil phagocytosis by IL15. This is Interleukin-2 receptor subunit beta from Homo sapiens (Human).